The primary structure comprises 266 residues: UPF0328 protein ECU05_1610/ECU11_0120 (266 aa).

This sequence belongs to the UPF0328 family.

This is UPF0328 protein ECU05_1610/ECU11_0120 from Encephalitozoon cuniculi (strain GB-M1) (Microsporidian parasite).